Consider the following 1056-residue polypeptide: PH and SEC7 domain-containing protein 4 (1056 aa).

Basic and acidic residues predominate over residues 25–42; sequence LEPHPGECPRETCSHEDP. Disordered stretches follow at residues 25–71, 87–149, 195–239, 340–362, 388–533, and 546–581; these read LEPH…SGVE, CQEQ…QNRS, LPGD…QWGA, GAPA…APSA, VQPW…GDVQ, and LRTP…LANG. 2 stretches are compositionally biased toward polar residues: residues 88-99 and 128-137; these read QEQTRATDPPES and NTASPGSPVN. Phosphoserine occurs at positions 131, 134, and 143. Acidic residues predominate over residues 207 to 220; it reads ENEDSGEDSSEPEG. The residue at position 413 (Ser413) is a Phosphoserine. The segment covering 414-423 has biased composition (basic and acidic residues); it reads QDRDEREGGH. Residues 438 to 456 are compositionally biased toward low complexity; the sequence is RSPASSPEPSSPESESRGP. Residues Ser448, Ser469, and Ser491 each carry the phosphoserine modification. 2 stretches are compositionally biased toward polar residues: residues 466–476 and 486–502; these read QEGSPQLQHHS and DASQ…QPSS. Positions 504–522 are enriched in basic and acidic residues; the sequence is KKKEAGEAPKPGEEVKSEG. The SEC7 domain occupies 544–736; that stretch reads ENLRTPMNSS…KALYWSIRSE (193 aa). Over residues 548–567 the composition is skewed to polar residues; sequence TPMNSSWLPGSPMPQAQSPE. The PH domain maps to 776-892; the sequence is PTYKQGILAR…WIARINLAAA (117 aa). Residues 921–976 adopt a coiled-coil conformation; sequence SSLEEQHRSHENCLDAAADDLLDLQRNLPERRGRGRELEEHRLRKEYLEYEKTRYE. The interval 1004-1056 is disordered; that stretch reads AGGTREPKLSLKKSHSSPSLHQDEAPTTAKVKRNISERRTYRKIIPKRNRNQL. Residues Ser1019 and Ser1022 each carry the phosphoserine modification. Residues 1043 to 1056 show a composition bias toward basic residues; the sequence is TYRKIIPKRNRNQL.

In terms of tissue distribution, widely expressed. Highest levels of expression are found in placenta, pancreas, spleen, thymus and peripheral blood.

Its subcellular location is the cell membrane. It localises to the cell projection. The protein resides in the ruffle membrane. In terms of biological role, guanine nucleotide exchange factor for ARF6 and ARL14/ARF7. Through ARL14 activation, controls the movement of MHC class II-containing vesicles along the actin cytoskeleton in dendritic cells. Involved in membrane recycling. Interacts with several phosphatidylinositol phosphate species, including phosphatidylinositol 3,4-bisphosphate, phosphatidylinositol 3,5-bisphosphate and phosphatidylinositol 4,5-bisphosphate. The sequence is that of PH and SEC7 domain-containing protein 4 (PSD4) from Homo sapiens (Human).